The chain runs to 506 residues: Anaerobic nitric oxide reductase transcription regulator NorR (506 aa).

D57 is subject to 4-aspartylphosphate. The region spanning 187–416 (MIGLSPAMTQ…LEHAIHRAVV (230 aa)) is the Sigma-54 factor interaction domain. ATP-binding positions include 215 to 222 (GETGTGKE) and 278 to 287 (ADNGTLFLDE). Positions 481–500 (WAASARALETDVANLHRLAK) form a DNA-binding region, H-T-H motif.

Its pathway is nitrogen metabolism; nitric oxide reduction. Functionally, required for the expression of anaerobic nitric oxide (NO) reductase, acts as a transcriptional activator for at least the norVW operon. Activation also requires sigma-54. This is Anaerobic nitric oxide reductase transcription regulator NorR from Salmonella arizonae (strain ATCC BAA-731 / CDC346-86 / RSK2980).